A 177-amino-acid chain; its full sequence is Peptide methionine sulfoxide reductase MsrA (177 aa).

C15 is an active-site residue.

The protein belongs to the MsrA Met sulfoxide reductase family.

It carries out the reaction L-methionyl-[protein] + [thioredoxin]-disulfide + H2O = L-methionyl-(S)-S-oxide-[protein] + [thioredoxin]-dithiol. The catalysed reaction is [thioredoxin]-disulfide + L-methionine + H2O = L-methionine (S)-S-oxide + [thioredoxin]-dithiol. In terms of biological role, has an important function as a repair enzyme for proteins that have been inactivated by oxidation. Catalyzes the reversible oxidation-reduction of methionine sulfoxide in proteins to methionine. The protein is Peptide methionine sulfoxide reductase MsrA of Mycobacterium leprae (strain Br4923).